Consider the following 210-residue polypeptide: Large ribosomal subunit protein bL25 (210 aa).

Low complexity predominate over residues 191 to 200; sequence EAPAEGAAAP. The segment at 191–210 is disordered; the sequence is EAPAEGAAAPAPAPAKKGKK.

The protein belongs to the bacterial ribosomal protein bL25 family. CTC subfamily. Part of the 50S ribosomal subunit; part of the 5S rRNA/L5/L18/L25 subcomplex. Contacts the 5S rRNA. Binds to the 5S rRNA independently of L5 and L18.

Its function is as follows. This is one of the proteins that binds to the 5S RNA in the ribosome where it forms part of the central protuberance. The polypeptide is Large ribosomal subunit protein bL25 (Paracidovorax citrulli (strain AAC00-1) (Acidovorax citrulli)).